The following is a 421-amino-acid chain: Prenyltransferase asqH2 (421 aa).

A disordered region spans residues 1-28 (MDRNSFTAYGPATGAITESGEQENDHTK). Glu-105 serves as a coordination point for L-tryptophan. Positions 119, 272, 274, 276, and 341 each coordinate substrate.

Belongs to the tryptophan dimethylallyltransferase family.

It carries out the reaction yaequinolone E + dimethylallyl diphosphate + H2O = [(1'E)-3'-hydroxy-3',7'-dimethylocta-1',6'-dien-1'-yl]-quinolinone B + diphosphate. Its pathway is secondary metabolite biosynthesis. It functions in the pathway alkaloid biosynthesis. The protein operates within mycotoxin biosynthesis. Its function is as follows. Prenyltransferase; part of the gene cluster that mediates the biosynthesis of the aspoquinolone mycotoxins. Within the pathway, the prenyltransferase asqH2 performs the second alkylation with DMAPP at delta(3') double bond to yield a carbenium ion intermediate, which can be attacked by H(2)O to yield a styrenyl quinolone containing a C3'-hydroxyprenyl chain. The first step of the pathway is catalyzed by the nonribosomal peptide synthetase asqK that condenses anthranilic acid and O-methyl-L-tyrosine to produce 4'-methoxycyclopeptin. 4'-methoxycyclopeptin is then converted to 4'-methoxydehydrocyclopeptin by the ketoglutarate-dependent dioxygenase asqJ. AsqJ also converts its first product 4'-methoxydehydrocyclopeptin to 4'-methoxycyclopenin. The following conversion of 4'-methoxycyclopenin into 4'-methoxyviridicatin is catalyzed by the cyclopenase asqI. 4'-methoxyviridicatin is the precursor of quinolone natural products, and is further converted to quinolinone B. The prenyltransferase asqH1 then catalyzes the canonical Friedel-Crafts alkylation of quinolinone B with dimethylallyl cation to yield dimethylallyl quinolone, which is subjected to FAD-dependent dehydrogenation by the FAD-linked oxidoreductase asqF to yield conjugated aryl diene. The delta(3') double bond then serves as the site of the second alkylation with DMAPP catalyzed by the prenyltransferase asqH2 to yield a carbenium ion intermediate, which can be attacked by H(2)O to yield a styrenyl quinolone containing a C3'-hydroxyprenyl chain. The FAD-dependent monooxygenase asqG performs epoxidation of the terminal C7'-C8' olefin. Finally, after dehydratation of the epoxide at C3 by asqC, the quinolone epoxide rearrangement protein asqO catalyzes an enzymatic 3-exo-tet cyclization to yield the cyclopropyl-THF ring system in aspoquinolone. The chain is Prenyltransferase asqH2 from Emericella nidulans (strain FGSC A4 / ATCC 38163 / CBS 112.46 / NRRL 194 / M139) (Aspergillus nidulans).